A 262-amino-acid polypeptide reads, in one-letter code: Acyl-[acyl-carrier-protein]--UDP-N-acetylglucosamine O-acyltransferase (262 aa).

It belongs to the transferase hexapeptide repeat family. LpxA subfamily. Homotrimer.

The protein resides in the cytoplasm. The enzyme catalyses a (3R)-hydroxyacyl-[ACP] + UDP-N-acetyl-alpha-D-glucosamine = a UDP-3-O-[(3R)-3-hydroxyacyl]-N-acetyl-alpha-D-glucosamine + holo-[ACP]. It functions in the pathway glycolipid biosynthesis; lipid IV(A) biosynthesis; lipid IV(A) from (3R)-3-hydroxytetradecanoyl-[acyl-carrier-protein] and UDP-N-acetyl-alpha-D-glucosamine: step 1/6. Involved in the biosynthesis of lipid A, a phosphorylated glycolipid that anchors the lipopolysaccharide to the outer membrane of the cell. The sequence is that of Acyl-[acyl-carrier-protein]--UDP-N-acetylglucosamine O-acyltransferase from Vibrio vulnificus (strain CMCP6).